The following is a 369-amino-acid chain: uncharacterized protein (369 aa).

This sequence to A.pernix APE1276 and APE1804.

This is an uncharacterized protein from Saccharolobus solfataricus (strain ATCC 35092 / DSM 1617 / JCM 11322 / P2) (Sulfolobus solfataricus).